We begin with the raw amino-acid sequence, 239 residues long: Ribonuclease 3 (239 aa).

Residues 18–141 form the RNase III domain; sequence YTTLEKALGY…LMAGVYLEAG (124 aa). Glu54 serves as a coordination point for Mg(2+). Residue Asp58 is part of the active site. Positions 127 and 130 each coordinate Mg(2+). Glu130 is an active-site residue. Positions 168 to 237 constitute a DRBM domain; the sequence is DYKTALQELT…AYQALQKLKE (70 aa).

It belongs to the ribonuclease III family. In terms of assembly, homodimer. The cofactor is Mg(2+).

The protein localises to the cytoplasm. The catalysed reaction is Endonucleolytic cleavage to 5'-phosphomonoester.. Digests double-stranded RNA. Involved in the processing of primary rRNA transcript to yield the immediate precursors to the large and small rRNAs (23S and 16S). Processes some mRNAs, and tRNAs when they are encoded in the rRNA operon. Processes pre-crRNA and tracrRNA of type II CRISPR loci if present in the organism. The protein is Ribonuclease 3 of Helicobacter pylori (strain ATCC 700392 / 26695) (Campylobacter pylori).